The primary structure comprises 298 residues: Chitin deacetylase (298 aa).

An N-terminal signal peptide occupies residues 1-16 (MLAPLFAALLAGAATA). A NodB homology domain is found at 39–222 (NTFALTFDDG…AIKAKGLTPV (184 aa)). The active-site Proton acceptor is the D46. Residue D46 coordinates acetate. Positions 47, 99, and 103 each coordinate Co(2+). An acetate-binding site is contributed by Y140. H196 functions as the Proton donor in the catalytic mechanism. In terms of domain architecture, Chitin-binding type-1 spans 256-298 (DDTCGGSNGYVCQNSQCCSQWGWCGTTSEYCAAGCQAAYGPCT). 4 disulfides stabilise this stretch: C259-C273, C267-C279, C272-C286, and C290-C297.

Belongs to the polysaccharide deacetylase family. Co(2+) is required as a cofactor.

The protein resides in the secreted. The catalysed reaction is [(1-&gt;4)-N-acetyl-beta-D-glucosaminyl](n) + n H2O = chitosan + n acetate. Inhibited by Fe(2+) and to a lesser extent by Mn(2+). Functionally, hydrolyzes the N-acetamido groups of N-acetyl-D-glucosamine polymers in chitin to form chitosan and acetate. May play a role in evasion of the host immune response; plant chitinases liberate chitin molecules from the fungal cell wall which act as elicitors of the plant immune response, deacetylation of the liberated chitin neutralizes elicitor activity. The polypeptide is Chitin deacetylase (Pestalotiopsis sp).